A 419-amino-acid chain; its full sequence is O-antigen ligase (419 aa).

The Cytoplasmic segment spans residues 1-19; the sequence is MLTSFKLHSLKPYTLKSSM. Residues 20 to 38 traverse the membrane as a helical segment; sequence ILEIITYILCFFSMIIAFV. At 39–43 the chain is on the periplasmic side; that stretch reads DNTFS. The helical transmembrane segment at 44-61 threads the bilayer; sequence IKIYNITAIVCLLSLILR. Topologically, residues 62-71 are cytoplasmic; sequence GRQENYNIKN. Residues 72 to 91 form a helical membrane-spanning segment; that stretch reads LILPLSIFLIGLLDLIWYSA. The Periplasmic portion of the chain corresponds to 92-107; sequence FKVDNSPFRATYHSYL. The helical transmembrane segment at 108 to 125 threads the bilayer; it reads NTAKIFIFGSFIVFLTLT. Over 126 to 134 the chain is Cytoplasmic; the sequence is SQLKSKKES. The chain crosses the membrane as a helical span at residues 135–153; sequence VLYTLYSLSFLIAGYAMYI. Residues 154-167 lie on the Periplasmic side of the membrane; that stretch reads NSIHENDRISFGVG. The chain crosses the membrane as a helical span at residues 168–187; sequence TATGAAYSTMLIGIVSGVAI. Over 188–194 the chain is Cytoplasmic; that stretch reads LYTKKNH. Residues 195 to 211 form a helical membrane-spanning segment; sequence PFLFLLNSCAVLYVLAL. The Periplasmic portion of the chain corresponds to 212 to 216; it reads TQTRA. The helical transmembrane segment at 217-234 threads the bilayer; that stretch reads TLLLFPIICVAALIAYYN. Topologically, residues 235-240 are cytoplasmic; it reads KSPKKF. A helical membrane pass occupies residues 241 to 259; that stretch reads TSSIVLLIAILASIVIIFN. Topologically, residues 260–348 are periplasmic; it reads KPIQNRYNEA…NEIIEAGSLK (89 aa). Residues 349–367 form a helical membrane-spanning segment; the sequence is GLMGIFSTLFLYFSLFYIA. At 368-372 the chain is on the cytoplasmic side; it reads YKKRA. A helical membrane pass occupies residues 373-391; the sequence is LGLLILTLGIVGIGLSDVI. Over 392–396 the chain is Periplasmic; it reads IWARS. A helical transmembrane segment spans residues 397-412; the sequence is IPIIIISAIVLLLVIN. The Cytoplasmic segment spans residues 413–419; the sequence is NRNNTIN.

In terms of assembly, homodimer.

Its subcellular location is the cell inner membrane. It carries out the reaction a lipid-linked O antigen + a lipid A-core oligosaccharide = a lipopolysaccharide + a polyisoprenyl diphosphate.. It participates in bacterial outer membrane biogenesis; lipopolysaccharide biosynthesis. Activity does not require ATP and magnesium ions. Its function is as follows. Transferase involved in the biosynthesis of the lipopolysaccharide (LPS). In vitro, catalyzes the transfer of a polymerized O-antigen molecule from its polyprenyl diphosphate membrane anchor to a terminal sugar of the lipid A-core oligosaccharide, finalizing the biosynthesis of the lipopolysaccharide. The enzyme is functional and can be used to give diverse hybrid O-antigens in vitro, but K12 strains do not produce the O-antigen in vivo due to mutations in the rfb gene cluster. K12 strains are phenotypically rough, their lipopolysaccharide having a complete core structure, but no O-antigen. In highly mucoid K12 strains, WaaL can ligate colanic acid (CA or M-antigen) repeats to a significant proportion of lipopolysaccharide (LPS) core acceptor molecules, forming the LPS glycoform M(LPS). The attachment point was identified as O-7 of the L-glycero-D-manno-heptose of the outer LPS core, the same position used for O-antigen ligation. Cannot catalyze ATP hydrolysis in vitro. The chain is O-antigen ligase from Escherichia coli (strain K12).